The chain runs to 161 residues: MATPTLTFTSSDGVDIPVERDVAERSQLIKNMLEDLGETGEPIPIPNVNEAVLKKVIEWCTHHKNDPPSTGDDDDSRRKTTDIDEWDQKFMQVDQEMLFEIILAANYLDIKGLLDVGCKTVANMIKGKSPEEIRKTFNIQNDFTPEEEDQIRRENEWAEDR.

The interval 102–161 is interaction with the F-box domain of F-box proteins; that stretch reads ILAANYLDIKGLLDVGCKTVANMIKGKSPEEIRKTFNIQNDFTPEEEDQIRRENEWAEDR.

It belongs to the SKP1 family. As to quaternary structure, component of the SCF (SKP1-CUL1-F-box protein) E3 ubiquitin ligase complexes.

It participates in protein modification; protein ubiquitination. Functionally, essential component of the SCF (SKP1-CUL1-F-box protein) E3 ubiquitin ligase complexes, which mediate the ubiquitination and subsequent proteasomal degradation of target proteins. Controls sulfur metabolite repression, probably by mediating the inactivation or degradation of the metR transcription factor. The chain is E3 ubiquitin ligase complex SCF subunit sconC (sconC) from Aspergillus flavus (strain ATCC 200026 / FGSC A1120 / IAM 13836 / NRRL 3357 / JCM 12722 / SRRC 167).